Reading from the N-terminus, the 145-residue chain is Sec-independent protein translocase protein TatB (145 aa).

Residues 1–21 (MLDVGMTELLCFAIIAILVLG) form a helical membrane-spanning segment.

This sequence belongs to the TatB family. The Tat system comprises two distinct complexes: a TatABC complex, containing multiple copies of TatA, TatB and TatC subunits, and a separate TatA complex, containing only TatA subunits. Substrates initially bind to the TatABC complex, which probably triggers association of the separate TatA complex to form the active translocon.

The protein resides in the cell inner membrane. Part of the twin-arginine translocation (Tat) system that transports large folded proteins containing a characteristic twin-arginine motif in their signal peptide across membranes. Together with TatC, TatB is part of a receptor directly interacting with Tat signal peptides. TatB may form an oligomeric binding site that transiently accommodates folded Tat precursor proteins before their translocation. The polypeptide is Sec-independent protein translocase protein TatB (Acinetobacter baumannii (strain ATCC 17978 / DSM 105126 / CIP 53.77 / LMG 1025 / NCDC KC755 / 5377)).